The chain runs to 243 residues: Uroporphyrinogen-III C-methyltransferase (243 aa).

S-adenosyl-L-homocysteine-binding positions include proline 12, 88–90 (SGD), 118–119 (ST), methionine 166, and alanine 195.

The protein belongs to the precorrin methyltransferase family.

It catalyses the reaction uroporphyrinogen III + 2 S-adenosyl-L-methionine = precorrin-2 + 2 S-adenosyl-L-homocysteine + H(+). It participates in cofactor biosynthesis; adenosylcobalamin biosynthesis; precorrin-2 from uroporphyrinogen III: step 1/1. It functions in the pathway porphyrin-containing compound metabolism; siroheme biosynthesis; precorrin-2 from uroporphyrinogen III: step 1/1. In terms of biological role, catalyzes the two successive C-2 and C-7 methylation reactions involved in the conversion of uroporphyrinogen III to precorrin-2 via the intermediate formation of precorrin-1. It is a step in the biosynthesis of both cobalamin (vitamin B12) and siroheme. This Synechococcus elongatus (strain ATCC 33912 / PCC 7942 / FACHB-805) (Anacystis nidulans R2) protein is Uroporphyrinogen-III C-methyltransferase.